A 340-amino-acid chain; its full sequence is MYSLARELLFKLSPETSHELSIDLIGAGGRLGLNGLLTKAPASLPTSVMGLQFANPVGLAAGLDKNGDAIDGFAQLGFGFVEIGTVTPRPQPGNPKPRLFRLPQAEAVINRMGFNNLGVDHLLERVKAAKYQGVLGINIGKNFDTPVERAVDDYLTCLDKVYAHASYVTVNVSSPNTPGLRSLQFGDSLKELLEALRRRQEDLTQEHGKRVPLAIKIAPDMSDEETALVASALLGADMDAVIATNTTLSREGVEGLAHADEAGGLSGSPVRDKSTHIVKVLAGELGGRLPIIAVGGITEGRHAAEKIAAGASLVQIYSGFIYKGPALIREAVDAIAALRK.

Residues 61-65 (AGLDK) and threonine 85 contribute to the FMN site. Lysine 65 is a binding site for substrate. 110 to 114 (NRMGF) contacts substrate. FMN contacts are provided by asparagine 138 and asparagine 171. Asparagine 171 contributes to the substrate binding site. Residue serine 174 is the Nucleophile of the active site. A substrate-binding site is contributed by asparagine 176. Residues lysine 216 and threonine 244 each coordinate FMN. Residue 245–246 (NT) coordinates substrate. FMN contacts are provided by residues glycine 267, glycine 296, and 317–318 (YS).

It belongs to the dihydroorotate dehydrogenase family. Type 2 subfamily. Monomer. It depends on FMN as a cofactor.

The protein localises to the cell membrane. It carries out the reaction (S)-dihydroorotate + a quinone = orotate + a quinol. The protein operates within pyrimidine metabolism; UMP biosynthesis via de novo pathway; orotate from (S)-dihydroorotate (quinone route): step 1/1. Catalyzes the conversion of dihydroorotate to orotate with quinone as electron acceptor. The chain is Dihydroorotate dehydrogenase (quinone) from Ectopseudomonas mendocina (strain ymp) (Pseudomonas mendocina).